The primary structure comprises 144 residues: MKLHTLKSTPGARVEKHRVGRGHAAGKGKQAGKGQSGQNKRHGHRLGFEGGQTPWFRRIGKRGFTNVNHVEYQVVNLKDLEQNFKANATVDLESLFKANLIKRSMPVKLLGNGKLTKKLNVTLHAASKSAIDAVEQAGGKFTIL.

Residues 1–52 (MKLHTLKSTPGARVEKHRVGRGHAAGKGKQAGKGQSGQNKRHGHRLGFEGGQ) are disordered. Basic residues predominate over residues 15–26 (EKHRVGRGHAAG).

The protein belongs to the universal ribosomal protein uL15 family. Part of the 50S ribosomal subunit.

Functionally, binds to the 23S rRNA. The sequence is that of Large ribosomal subunit protein uL15 from Mycoplasmopsis agalactiae (strain NCTC 10123 / CIP 59.7 / PG2) (Mycoplasma agalactiae).